The sequence spans 529 residues: tRNA pseudouridine synthase Pus10 (529 aa).

Zn(2+) contacts are provided by C21 and C24. The stretch at 42–89 (KELLNELQKFLETEKDELILEVMNPPPKKIRLQELEDSIDNLSQNGEG) forms a coiled coil. Residues S79 and S84 each carry the phosphoserine modification. Residues C109 and C112 each contribute to the Zn(2+) site. The segment at 304–317 (TPWIIDGERKLESS) is RNA binding forefinger loop. The active-site Nucleophile is the D344. Residues 442–457 (QKTPLRVLHRRPLAVR) are RNA binding thumb loop.

It belongs to the pseudouridine synthase Pus10 family. Interacts with components of the microprocessor complex DROSHA and DGCR8. In terms of processing, proteolytically cleaved during TRAIL-induced cell death. Cleaved, in vitro, either by caspase-3 (CASP3) or caspase-8 (CASP8).

It is found in the nucleus. It localises to the cytoplasm. The protein localises to the mitochondrion. It catalyses the reaction uridine(55) in tRNA = pseudouridine(55) in tRNA. It carries out the reaction uridine(54) in tRNA = pseudouridine(54) in tRNA. Functionally, protein with different functions depending on its subcellular location: involved in miRNA processing in the nucleus and acts as a tRNA pseudouridylate synthase in the cytoplasm. In the cytoplasm, acts as a pseudouridylate synthase by catalyzing synthesis of pseudouridine(54) and pseudouridine(55) from uracil-54 and uracil-55, respectively, in the psi GC loop of a subset of tRNAs. tRNA pseudouridylate synthase activity is enhanced by the presence of 1-methyladenosine at position 53-61 of tRNAs. Does not show tRNA pseudouridylate synthase activity in the nucleus. In the nucleus, promotes primary microRNAs (pri-miRNAs) processing independently of its RNA pseudouridylate synthase activity. Binds pri-miRNAs. Modulator of TRAIL/TNFSF10-induced cell death via activation of procaspase-8 and BID cleavage. Required for the progression of the apoptotic signal through intrinsic mitochondrial cell death. This is tRNA pseudouridine synthase Pus10 from Homo sapiens (Human).